The chain runs to 697 residues: Transmembrane protein 168 (697 aa).

3 consecutive transmembrane segments (helical) span residues 36–56 (LGYL…YVRW), 63–83 (LILV…ILYY), and 89–109 (AASL…LCFL). The N-linked (GlcNAc...) asparagine glycan is linked to Asn-111. Helical transmembrane passes span 172–192 (MLVE…MLII), 199–219 (FLAI…SLET), 223–243 (PIAF…DIYF), 265–285 (LSVV…AFKL), 293–313 (FVIP…IIFL), 352–372 (FCLI…ILGA), and 380–400 (GIFL…HGLF). Residues Asn-533 and Asn-598 are each glycosylated (N-linked (GlcNAc...) asparagine). A helical transmembrane segment spans residues 646-666 (ITYPLVHLANWLCGLNLFWIC).

Belongs to the TMEM168 family.

The protein resides in the nucleus membrane. In terms of biological role, plays a key role in maintaining the cardiac electrical stability by modulating cell surface expression of SCN5A. May play a role in the modulation of anxiety behavior by regulating GABAergic neuronal system in the nucleus accumbens. This Homo sapiens (Human) protein is Transmembrane protein 168.